The following is a 54-amino-acid chain: Large ribosomal subunit protein bL33B (54 aa).

This sequence belongs to the bacterial ribosomal protein bL33 family.

The chain is Large ribosomal subunit protein bL33B from Saccharopolyspora erythraea (strain ATCC 11635 / DSM 40517 / JCM 4748 / NBRC 13426 / NCIMB 8594 / NRRL 2338).